The following is a 178-amino-acid chain: Probable chorismate pyruvate-lyase (178 aa).

M37, R78, L114, and E165 together coordinate substrate.

It belongs to the UbiC family.

Its subcellular location is the cytoplasm. It catalyses the reaction chorismate = 4-hydroxybenzoate + pyruvate. It functions in the pathway cofactor biosynthesis; ubiquinone biosynthesis. Removes the pyruvyl group from chorismate, with concomitant aromatization of the ring, to provide 4-hydroxybenzoate (4HB) for the ubiquinone pathway. The sequence is that of Probable chorismate pyruvate-lyase from Aeromonas salmonicida (strain A449).